Reading from the N-terminus, the 567-residue chain is Septation ring formation regulator EzrA (567 aa).

Over 1–2 (MG) the chain is Extracellular. The helical transmembrane segment at 3 to 21 (MAWIVLLLGAGAIIYNHVY) threads the bilayer. At 22-567 (RKRMYREIDR…LWQEDNSREQ (546 aa)) the chain is on the cytoplasmic side. Coiled coils occupy residues 98–159 (YRQA…AYRY) and 251–497 (HMER…IEQA).

It belongs to the EzrA family.

The protein localises to the cell membrane. Functionally, negative regulator of FtsZ ring formation; modulates the frequency and position of FtsZ ring formation. Inhibits FtsZ ring formation at polar sites. Interacts either with FtsZ or with one of its binding partners to promote depolymerization. The chain is Septation ring formation regulator EzrA from Geobacillus kaustophilus (strain HTA426).